The chain runs to 249 residues: MATDPIHQFQISKLIPIEIGGLDFSFTNSSLFMVATVAAAGAFLYLTTSSRGLVPSRMQSVSEMSYEFVASMLRDAAGSHGMRFFPFVFSLFMFVLVANLLGLFPYFFTVTSHIVVTFALALLVIGTVLVYGFWKHGFGFLKLFVPEGVPGVLLPLVVLIEVISFLSRPISLSVRLFANMLAGHITLKVFAGFVTSLGALGVAGAAGAVLPLAMTVALTGLELLVAFLQAYVFAVLTCMYLNDALHPGH.

6 consecutive transmembrane segments (helical) span residues 26 to 46, 84 to 104, 114 to 134, 143 to 163, 185 to 205, and 208 to 228; these read FTNS…FLYL, FFPF…LGLF, IVVT…YGFW, LFVP…IEVI, ITLK…VAGA, and AVLP…VAFL.

It belongs to the ATPase A chain family. In terms of assembly, F-type ATPases have 2 components, CF(1) - the catalytic core - and CF(0) - the membrane proton channel. CF(1) has five subunits: alpha(3), beta(3), gamma(1), delta(1), epsilon(1). CF(0) has three main subunits: a(1), b(2) and c(9-12). The alpha and beta chains form an alternating ring which encloses part of the gamma chain. CF(1) is attached to CF(0) by a central stalk formed by the gamma and epsilon chains, while a peripheral stalk is formed by the delta and b chains.

It is found in the cell inner membrane. In terms of biological role, key component of the proton channel; it plays a direct role in the translocation of protons across the membrane. The polypeptide is ATP synthase subunit a (Chelativorans sp. (strain BNC1)).